The sequence spans 209 residues: MNKGYPITDLVILAGGQARRMNGLNKLLQQFDGDTQLLKIHQKLKSSVSEIWVNSHRDYSIYQSIVPDIKCFQDDASGFFGPLMGMKSAWSHVRADYVLFIPCDVTYIPTQVVAKLHSALRKNKQAQAAYVSINGDALYPFCLLKRESLEVLEQQIDKQQLSLKNCFKLLHAQVAIFQKQNLFFHSINSLDELQQYKQIKAFKEIFSTN.

Residues 13–15 (LAG), Lys-26, Asn-54, Asp-74, and Asp-104 each bind GTP. Asp-104 lines the Mg(2+) pocket.

This sequence belongs to the MobA family. Monomer. Requires Mg(2+) as cofactor.

Its subcellular location is the cytoplasm. It catalyses the reaction Mo-molybdopterin + GTP + H(+) = Mo-molybdopterin guanine dinucleotide + diphosphate. Its function is as follows. Transfers a GMP moiety from GTP to Mo-molybdopterin (Mo-MPT) cofactor (Moco or molybdenum cofactor) to form Mo-molybdopterin guanine dinucleotide (Mo-MGD) cofactor. This Acinetobacter baumannii (strain ACICU) protein is Molybdenum cofactor guanylyltransferase.